The primary structure comprises 384 residues: Chaperone protein DnaJ (384 aa).

The region spanning 5–70 (DFYEVLGVSK…DKKAAYDRYG (66 aa)) is the J domain. Residues 143-221 (GAQKTITVPG…CHGSGRIEKE (79 aa)) form a CR-type zinc finger. Residues cysteine 156, cysteine 159, cysteine 173, cysteine 176, cysteine 195, cysteine 198, cysteine 209, and cysteine 212 each contribute to the Zn(2+) site. CXXCXGXG motif repeat units follow at residues 156–163 (CGSCNGTG), 173–180 (CPTCSGLG), 195–202 (CPTCGGQG), and 209–216 (CRVCHGSG).

The protein belongs to the DnaJ family. As to quaternary structure, homodimer. The cofactor is Zn(2+).

The protein localises to the cytoplasm. Functionally, participates actively in the response to hyperosmotic and heat shock by preventing the aggregation of stress-denatured proteins and by disaggregating proteins, also in an autonomous, DnaK-independent fashion. Unfolded proteins bind initially to DnaJ; upon interaction with the DnaJ-bound protein, DnaK hydrolyzes its bound ATP, resulting in the formation of a stable complex. GrpE releases ADP from DnaK; ATP binding to DnaK triggers the release of the substrate protein, thus completing the reaction cycle. Several rounds of ATP-dependent interactions between DnaJ, DnaK and GrpE are required for fully efficient folding. Also involved, together with DnaK and GrpE, in the DNA replication of plasmids through activation of initiation proteins. The sequence is that of Chaperone protein DnaJ from Rhodobacter capsulatus (Rhodopseudomonas capsulata).